Reading from the N-terminus, the 1553-residue chain is MNFRCSSPLWYDDHLSDCVVNHYLSTLIPLTACLASAIACLISYFHARQNAKHIDTGFHPVASSEDEAVDQIAHVSQQYITAIPPVIEKLEVALILAEISIAIFLLIFSGENTDLTSVFASAVSSIYLLLILFVRLTRSLQSYVDLQPHSSVLYTLQWTCLTAIVHAAILGNSERNFTIATLVRFALFTFLCLFHWTAPRIPVEPYDEDHVLFLDPSEDETASLLSRMTFSWLDKLVWKAYRATLQVSDLYQLNHNHRSGVVAPRFKNTATNSLLWRLFGFFKSDLLWQGAWATLNSFAVFVPPVLMRSLLEYLEVPDLASQSTAWLYVTGLLVAGIVAGVAGCQCDWKGREMAARTRAVLINEIYTKVLRKGVALHLQTNSEQPEAADNFASDGNIFNLLTVDTEHVSEMSGYLYLVWITFPVQTAIGTYLLYRLLGISGIVGVALMLGLLPLNILISRRLVAVQARVLTASDARIQASSEILNNVRTIKYSAWEAVFKKRVLSKRRIELVEMRSRFIWWSINMTTFFSLPLIVTILTLFFYTVVWDNSMGTAVAFPALVIFSILRIPFNRIADAITFLLRAHVSLGRIEKFLQEQETGKYEQLSRTDSVEVGFNNATLTWPNGGFGNKAVTENKRSDIQLTELPSMRPFKLKGLNIRFQPGALNVICGPSGSGKSSLLLALLGEMALVNGQVFLPHKHNWHELSTDSLTETTAYCPQEAWILNRTIRANIVFDLPFDGRRYEAVLEAVALRPDIASFDQGDQTLAGEGGSRLSGGQKQRVSLARALYSRSKYVLLDDCLSAVDSKTANHIFFHAVKGDLMQGRTCMFATNSIQLTIPHCDYIVLLDDGRVRGQGTAEELVSEGRIDADIMQNKAEFGSEKPGAYDTIELDHAIKSPSSRSSLDTVSLLEVDPQQEDPEAGYEESKAEGAVAWSVIRTYLVTLGPPWYWVLVLFMFGIQQFISLATNIWIKEWAVRYDMLDNFAFDPIQRNATTRDETLDEPEEPQKVQARYYMAIYVAICLAYAFFTFARDLIVFYGSLKASSEIYERLLNSVLFAKLLFFDRIPLGQITNRFSRDVEVLDQNISTFSINTLQIAASLVMIIVFISSVVPAFLIAAVFICVAYWFVMTIFINGARDLRRIESVERSPVYQQFSEALSGCVSIRAYARASIFTAQNQVLVDRLNSPYLLQWASQQWLGFRVNFLGSLILFFTGAFVVWDLESVDPSSAALVLTYAAMFSESIMWFVQLYAIVQQNLNSVERVVEYTEIEQEANQPLKRAVYDLPEDWPSRGGVRFDAYTTRYAPELPPVLNDITFNVPPGKRVAVVGRTGAGKSTLTLALIRGLEAELGRIEIDGIDISEVTLDRLRQAVTVVPQDPGVFRGTLRDNLDPLHLYSNEEMIETLRAVRLLDAVRTYIPGNSATPLDCLDHPANALSRGQRQLLCIARTLLRRSRVLVFDEATASIDHTTDAAIQESLRASVTVGTTVITVAHRLLTIADYDKVVVLDAGCVAEQGSVQELLDRDDDGIFRRLCVQSGDLEKIERVAAEKSGRK.

Helical transmembrane passes span 27–47 (LIPL…YFHA), 90–110 (LEVA…IFSG), 114–134 (DLTS…ILFV), and 151–171 (SVLY…AILG). N-linked (GlcNAc...) asparagine glycosylation is present at asparagine 176. Transmembrane regions (helical) follow at residues 177-197 (FTIA…FHWT), 286-306 (LLWQ…PPVL), 324-344 (TAWL…VAGC), 413-433 (GYLY…TYLL), and 438-458 (GISG…NILI). The ABC transmembrane type-1 1 domain occupies 293–582 (ATLNSFAVFV…IADAITFLLR (290 aa)). Asparagine 524 is a glycosylation site (N-linked (GlcNAc...) asparagine). 2 consecutive transmembrane segments (helical) span residues 527 to 547 (TFFS…TVVW) and 550 to 570 (SMGT…RIPF). Asparagine 617 carries an N-linked (GlcNAc...) asparagine glycan. The 240-residue stretch at 635–874 (NKRSDIQLTE…GRIDADIMQN (240 aa)) folds into the ABC transporter 1 domain. ATP is bound at residue 670–677 (GPSGSGKS). A glycan (N-linked (GlcNAc...) asparagine) is linked at asparagine 725. The chain crosses the membrane as a helical span at residues 948-970 (WYWVLVLFMFGIQQFISLATNIW). The 305-residue stretch at 951–1255 (VLVLFMFGIQ…FVQLYAIVQQ (305 aa)) folds into the ABC transmembrane type-1 2 domain. The N-linked (GlcNAc...) asparagine glycan is linked to asparagine 992. A helical transmembrane segment spans residues 1017–1037 (IYVAICLAYAFFTFARDLIVF). Residue asparagine 1085 is glycosylated (N-linked (GlcNAc...) asparagine). The next 4 helical transmembrane spans lie at 1086–1108 (ISTF…VFIS), 1113–1135 (AFLI…FING), 1204–1224 (FLGS…LESV), and 1229–1249 (AALV…FVQL). An ABC transporter 2 domain is found at 1294–1533 (VRFDAYTTRY…DDDGIFRRLC (240 aa)). Residue 1328-1335 (GRTGAGKS) participates in ATP binding.

Belongs to the ABC transporter superfamily.

It localises to the membrane. Its pathway is mycotoxin biosynthesis. ABC-type transporter; part of the gene cluster that mediates the biosynthesis of the mycotoxin cyclochlorotine, a hepatotoxic and carcinogenic cyclic chlorinated pentapeptide. CctS is essential for the biosynthesis of cyclochlorotine, maybe as a chloride channel that supplies chloride for chlorination by cctP2. The sequence is that of ABC-type transporter cctS from Talaromyces islandicus (Penicillium islandicum).